The primary structure comprises 454 residues: Bifunctional protein GlmU (454 aa).

The interval M1–R226 is pyrophosphorylase. UDP-N-acetyl-alpha-D-glucosamine is bound by residues L8 to G11, K22, Q73, G78 to T79, Y99 to D101, G136, E151, N166, and N224. D101 serves as a coordination point for Mg(2+). A Mg(2+)-binding site is contributed by N224. Residues M227–Q247 form a linker region. Residues G248 to K454 are N-acetyltransferase. Residues R330 and K348 each coordinate UDP-N-acetyl-alpha-D-glucosamine. H360 acts as the Proton acceptor in catalysis. UDP-N-acetyl-alpha-D-glucosamine-binding residues include Y363 and N374. Acetyl-CoA is bound by residues A377, N383–Y384, S402, A420, and R437.

This sequence in the N-terminal section; belongs to the N-acetylglucosamine-1-phosphate uridyltransferase family. It in the C-terminal section; belongs to the transferase hexapeptide repeat family. As to quaternary structure, homotrimer. The cofactor is Mg(2+).

It localises to the cytoplasm. The enzyme catalyses alpha-D-glucosamine 1-phosphate + acetyl-CoA = N-acetyl-alpha-D-glucosamine 1-phosphate + CoA + H(+). The catalysed reaction is N-acetyl-alpha-D-glucosamine 1-phosphate + UTP + H(+) = UDP-N-acetyl-alpha-D-glucosamine + diphosphate. It participates in nucleotide-sugar biosynthesis; UDP-N-acetyl-alpha-D-glucosamine biosynthesis; N-acetyl-alpha-D-glucosamine 1-phosphate from alpha-D-glucosamine 6-phosphate (route II): step 2/2. The protein operates within nucleotide-sugar biosynthesis; UDP-N-acetyl-alpha-D-glucosamine biosynthesis; UDP-N-acetyl-alpha-D-glucosamine from N-acetyl-alpha-D-glucosamine 1-phosphate: step 1/1. It functions in the pathway bacterial outer membrane biogenesis; LPS lipid A biosynthesis. In terms of biological role, catalyzes the last two sequential reactions in the de novo biosynthetic pathway for UDP-N-acetylglucosamine (UDP-GlcNAc). The C-terminal domain catalyzes the transfer of acetyl group from acetyl coenzyme A to glucosamine-1-phosphate (GlcN-1-P) to produce N-acetylglucosamine-1-phosphate (GlcNAc-1-P), which is converted into UDP-GlcNAc by the transfer of uridine 5-monophosphate (from uridine 5-triphosphate), a reaction catalyzed by the N-terminal domain. This Pseudomonas paraeruginosa (strain DSM 24068 / PA7) (Pseudomonas aeruginosa (strain PA7)) protein is Bifunctional protein GlmU.